We begin with the raw amino-acid sequence, 273 residues long: Ribosomal RNA small subunit methyltransferase A (273 aa).

The S-adenosyl-L-methionine site is built by N18, L20, G45, E66, D91, and N113.

It belongs to the class I-like SAM-binding methyltransferase superfamily. rRNA adenine N(6)-methyltransferase family. RsmA subfamily.

It localises to the cytoplasm. It catalyses the reaction adenosine(1518)/adenosine(1519) in 16S rRNA + 4 S-adenosyl-L-methionine = N(6)-dimethyladenosine(1518)/N(6)-dimethyladenosine(1519) in 16S rRNA + 4 S-adenosyl-L-homocysteine + 4 H(+). In terms of biological role, specifically dimethylates two adjacent adenosines (A1518 and A1519) in the loop of a conserved hairpin near the 3'-end of 16S rRNA in the 30S particle. May play a critical role in biogenesis of 30S subunits. The polypeptide is Ribosomal RNA small subunit methyltransferase A (Salmonella agona (strain SL483)).